Consider the following 248-residue polypeptide: Trypsin I-P1 (248 aa).

Residues 1–15 form the signal peptide; sequence MKFLVLVAFVGVTVA. The propeptide at 16–25 is activation peptide; that stretch reads FPISDEDDDK. Residues 26–246 form the Peptidase S1 domain; sequence IVGGYSCARS…YVSWIKTTMS (221 aa). 6 disulfide bridges follow: cysteine 32–cysteine 162, cysteine 50–cysteine 66, cysteine 134–cysteine 235, cysteine 141–cysteine 208, cysteine 173–cysteine 187, and cysteine 198–cysteine 222. Residue histidine 65 is the Charge relay system of the active site. Positions 77, 79, and 87 each coordinate Ca(2+). The active-site Charge relay system is aspartate 109. Residue serine 202 is the Charge relay system of the active site.

This sequence belongs to the peptidase S1 family. The cofactor is Ca(2+). In terms of tissue distribution, high levels are seen in the pancreas while lower levels are found in the liver, spleen and thymus.

The protein localises to the secreted. It localises to the extracellular space. It catalyses the reaction Preferential cleavage: Arg-|-Xaa, Lys-|-Xaa.. This Gallus gallus (Chicken) protein is Trypsin I-P1.